Reading from the N-terminus, the 3029-residue chain is Polycystin-1-related protein (3029 aa).

The N-terminal stretch at 1 to 21 is a signal peptide; the sequence is MAKHLYLAFSLILVPFLVSKA. Topologically, residues 22-1685 are extracellular; it reads KQTSNGEVPW…RDTDKLKNSP (1664 aa). The WSC domain maps to 29 to 121; it reads VPWLVGCYRY…KNVASVYSTA (93 aa). 2 PKD domains span residues 364–450 and 546–634; these read EGHC…IKGV and DHLF…PECY. In terms of domain architecture, REJ spans 633–1476; sequence CYTRGVAIVG…NPYFSDMNHT (844 aa). Disordered regions lie at residues 754–773, 909–931, and 989–1051; these read RKGP…HPDE, CPSD…SNSP, and TSAI…PNKP. Over residues 918 to 931 the composition is skewed to polar residues; that stretch reads VTPSTTPMTDSNSP. The span at 997-1013 shows a compositional bias: acidic residues; that stretch reads SGDVDDDEVNNDNDDDS. The segment covering 1020–1047 has biased composition (polar residues); it reads TLPTPLSMTNANSVNKPIITTDTPSFNK. Residues 1525 to 1671 enclose the GAIN-B domain; sequence RNVHVINQTA…GFIQPPNSLH (147 aa). 2 disulfide bridges follow: cysteine 1624–cysteine 1651 and cysteine 1639–cysteine 1653. The GPS stretch occupies residues 1624 to 1671; that stretch reads CFYWNKRGKHWASDGCRLEKSINHTLVCRCNHLTAFSGGFIQPPNSLH. A helical membrane pass occupies residues 1686–1706; sequence LTMVLVISILVMYFLLLGFCV. Residues 1707-1895 are Cytoplasmic-facing; that stretch reads KADRHDKKKL…SYSRFTRAQR (189 aa). One can recognise a PLAT domain in the interval 1733-1851; it reads SRFQLSVQTG…GNGKVECELF (119 aa). A helical membrane pass occupies residues 1896–1916; it reads LSCCLSLLLSFLCVNIAWYRP. Over 1917–1933 the chain is Extracellular; the sequence is KIEVTEVLGVLDVSANS. The chain crosses the membrane as a helical span at residues 1934–1954; the sequence is IMIGVLGSLMVLPVNFLWIFF. The Cytoplasmic segment spans residues 1955–2101; that stretch reads FRYSRRSLSR…YRSKFSLPHG (147 aa). The helical transmembrane segment at 2102–2122 threads the bilayer; sequence FVYVAWFGCLITGTVTSAITI. The Extracellular segment spans residues 2123 to 2140; it reads WYGLSFGWDLSVHWFQSL. A helical transmembrane segment spans residues 2141–2161; sequence VFSLLESLLLSQPIMVLAFIF. At 2162–2250 the chain is on the cytoplasmic side; it reads YMSHKTKSGK…SLKNRVLRNY (89 aa). Residues 2251–2271 traverse the membrane as a helical segment; sequence VVELFVFIMFFVVTCALVFSV. The Extracellular portion of the chain corresponds to 2272 to 2462; sequence ADPDVYHLNQ…GYSYFIRFTK (191 aa). A helical membrane pass occupies residues 2463–2483; that stretch reads LLFVVFFLYLLQHEFFLALKM. The Cytoplasmic portion of the chain corresponds to 2484-2496; it reads TFSYFTNFWRVYQ. The chain crosses the membrane as a helical span at residues 2497-2517; it reads LLTIAISSACIVSYIHWSLSL. Residues 2518–2538 are Extracellular-facing; the sequence is YALLREVETERQSRVFYLSRQ. The chain crosses the membrane as a helical span at residues 2539–2559; sequence ISWSQGFLQASYSLLLFLLLI. The Cytoplasmic portion of the chain corresponds to 2560–2586; sequence RCLHLLRPFRFVRHFGRILSTSISSLL. Residues 2587–2607 traverse the membrane as a helical segment; the sequence is ACWVFGFILVVAFAHPGYLLF. The Extracellular segment spans residues 2608 to 2651; that stretch reads GSVHSSFKSFGDAFLLVTSFFRLEGVARYQDFALEEQTLLLSTY. The chain crosses the membrane as a helical span at residues 2652–2672; the sequence is FALFLIGFCVIVRGSTAAVVL. Residues 2673-3029 lie on the Cytoplasmic side of the membrane; that stretch reads HGIRCLGKRR…PVGQRVVSAM (357 aa). Residues 2704–2726 form a disordered region; it reads KKPKKPRPNSVSDLEETDDEDDL. Over residues 2716 to 2726 the composition is skewed to acidic residues; the sequence is DLEETDDEDDL.

This sequence belongs to the polycystin family. As to quaternary structure, heterodimer of 2 chains generated by proteolytic processing; the large extracellular N-terminal fragment and the membrane-bound C-terminal fragment predominantly remain associated and non-covalently linked. Autoproteolytically processed at the GPS region of the GAIN-B domain; this cleavage modulates receptor activity. Component of the acid-insoluble and acid-soluble organic matrix of the aragonitic skeleton (at protein level).

Its subcellular location is the membrane. This is Polycystin-1-related protein from Acropora millepora (Staghorn coral).